Here is a 111-residue protein sequence, read N- to C-terminus: Large ribosomal subunit protein uL23 (111 aa).

This sequence belongs to the universal ribosomal protein uL23 family. As to quaternary structure, part of the 50S ribosomal subunit. Contacts protein L29, and trigger factor when it is bound to the ribosome.

Functionally, one of the early assembly proteins it binds 23S rRNA. One of the proteins that surrounds the polypeptide exit tunnel on the outside of the ribosome. Forms the main docking site for trigger factor binding to the ribosome. The sequence is that of Large ribosomal subunit protein uL23 from Chlamydia trachomatis serovar L2 (strain ATCC VR-902B / DSM 19102 / 434/Bu).